We begin with the raw amino-acid sequence, 446 residues long: Tetratricopeptide repeat protein 23 (446 aa).

TPR repeat units follow at residues 45–78 (LHLCEERAKSYSSIREYKQAIQELVRCVALTKIC), 137–170 (LELFYTLGKALVSLQKFKEAWENLIKAERLSKEM), 186–219 (SRIKLSFAQLYQGQKRSKEAFPYYQKALEYTETT), and 356–389 (AETYRILGRADLAQGNNNGAHMKLKKCVQIETFL).

As to quaternary structure, associated with the EvC complex composed of EFCAB7, IQCE, EVC2 and EVC.

The protein resides in the cell projection. It localises to the cilium. Participates positively in the ciliary Hedgehog (Hh) signaling. This chain is Tetratricopeptide repeat protein 23 (Ttc23), found in Rattus norvegicus (Rat).